Consider the following 426-residue polypeptide: Histidine--tRNA ligase (426 aa).

Belongs to the class-II aminoacyl-tRNA synthetase family. In terms of assembly, homodimer.

The protein localises to the cytoplasm. It carries out the reaction tRNA(His) + L-histidine + ATP = L-histidyl-tRNA(His) + AMP + diphosphate + H(+). The polypeptide is Histidine--tRNA ligase (Streptococcus agalactiae serotype III (strain NEM316)).